Here is a 728-residue protein sequence, read N- to C-terminus: Catalase-peroxidase 1 (728 aa).

The segment at residues 91-218 (WHSAGTYRTA…LAAVQMGLIY (128 aa)) is a cross-link (tryptophyl-tyrosyl-methioninium (Trp-Tyr) (with M-244)). Catalysis depends on H92, which acts as the Proton acceptor. A cross-link (tryptophyl-tyrosyl-methioninium (Tyr-Met) (with W-91)) is located at residues 218-244 (YVNPEGPDGNPDPVAAAHDIRETFARM). H259 contacts heme b.

This sequence belongs to the peroxidase family. Peroxidase/catalase subfamily. Homodimer or homotetramer. Heme b serves as cofactor. In terms of processing, formation of the three residue Trp-Tyr-Met cross-link is important for the catalase, but not the peroxidase activity of the enzyme.

The catalysed reaction is H2O2 + AH2 = A + 2 H2O. The enzyme catalyses 2 H2O2 = O2 + 2 H2O. Its function is as follows. Bifunctional enzyme with both catalase and broad-spectrum peroxidase activity. This chain is Catalase-peroxidase 1, found in Burkholderia cenocepacia (strain HI2424).